A 332-amino-acid polypeptide reads, in one-letter code: Super small secreted glycoprotein (332 aa).

The N-terminal stretch at 1–33 (MGSGYQLLQLPRERFRKTSFLVWVIILFQRAIS) is a signal peptide. The N-linked (GlcNAc...) asparagine; by host glycan is linked to Asn41. Disulfide bonds link Cys109–Cys136 and Cys122–Cys148. Residues Asn205, Asn229, Asn239, Asn258, and Asn269 are each glycosylated (N-linked (GlcNAc...) asparagine; by host).

It belongs to the filoviruses glycoprotein family.

It localises to the secreted. In Reston ebolavirus (strain Reston-89) (REBOV), this protein is Super small secreted glycoprotein (GP).